The sequence spans 607 residues: Aspartate--tRNA(Asp/Asn) ligase (607 aa).

Residue E194 participates in L-aspartate binding. Residues 218-221 (QLFK) form an aspartate region. L-aspartate is bound at residue R240. ATP-binding positions include 240–242 (RDE) and Q249. H468 lines the L-aspartate pocket. Residue E502 coordinates ATP. R509 is a binding site for L-aspartate. ATP is bound at residue 554–557 (GLDR).

This sequence belongs to the class-II aminoacyl-tRNA synthetase family. Type 1 subfamily. In terms of assembly, homodimer.

The protein localises to the cytoplasm. It carries out the reaction tRNA(Asx) + L-aspartate + ATP = L-aspartyl-tRNA(Asx) + AMP + diphosphate. In terms of biological role, aspartyl-tRNA synthetase with relaxed tRNA specificity since it is able to aspartylate not only its cognate tRNA(Asp) but also tRNA(Asn). Reaction proceeds in two steps: L-aspartate is first activated by ATP to form Asp-AMP and then transferred to the acceptor end of tRNA(Asp/Asn). This Desulfotalea psychrophila (strain LSv54 / DSM 12343) protein is Aspartate--tRNA(Asp/Asn) ligase.